Consider the following 314-residue polypeptide: Olfactory receptor 1468 (314 aa).

Topologically, residues 1 to 25 (MTEENQTVISQFLLLGLPIPSEHQH) are extracellular. N5 carries N-linked (GlcNAc...) asparagine glycosylation. A helical transmembrane segment spans residues 26–49 (VFYALFLSMYLTTVLGNLIIIILI). The Cytoplasmic segment spans residues 50–57 (HLDSHLHT). Residues 58–79 (PMYLFLSNLSFSDLCFSSVTMP) form a helical membrane-spanning segment. Residues 80–100 (KLLQNMQSQVPSIPFAGCLTQ) lie on the Extracellular side of the membrane. C97 and C189 are oxidised to a cystine. Residues 101-120 (LYFYLYFADLESFLLVAMAY) form a helical membrane-spanning segment. Over 121 to 139 (DRYVAICFPLHYMSIMSPK) the chain is Cytoplasmic. The helical transmembrane segment at 140-158 (LCVSLVVLSWVLTTFHAML) threads the bilayer. Topologically, residues 159–196 (HTLLMARLSFCADNMIPHFFCDISPLLKLSCSDTHVNE) are extracellular. A helical transmembrane segment spans residues 197-219 (LVIFVMGGLVIVIPFVLIIVSYA). At 220-236 (RVVASILKVPSVRGIHK) the chain is on the cytoplasmic side. Residues 237-260 (IFSTCGSHLSVVSLFYGTIIGLYL) form a helical membrane-spanning segment. At 261–272 (CPSANNSTVKET) the chain is on the extracellular side. The chain crosses the membrane as a helical span at residues 273–292 (VMAMMYTVVTPMLNPFIYSL). The Cytoplasmic portion of the chain corresponds to 293 to 314 (RNRDMKEALIRVLCKKKITFCL).

This sequence belongs to the G-protein coupled receptor 1 family. In terms of tissue distribution, olfactory epithelium.

The protein resides in the cell membrane. Functionally, odorant receptor. The polypeptide is Olfactory receptor 1468 (Olr1468) (Rattus norvegicus (Rat)).